We begin with the raw amino-acid sequence, 327 residues long: Malate dehydrogenase (327 aa).

Residue 12-18 participates in NAD(+) binding; that stretch reads GAAGQIA. Substrate is bound by residues arginine 93 and arginine 99. NAD(+) is bound by residues asparagine 106, glutamine 113, and 130 to 132; that span reads VGN. Positions 132 and 163 each coordinate substrate. Histidine 188 acts as the Proton acceptor in catalysis.

This sequence belongs to the LDH/MDH superfamily. MDH type 2 family.

It carries out the reaction (S)-malate + NAD(+) = oxaloacetate + NADH + H(+). In terms of biological role, catalyzes the reversible oxidation of malate to oxaloacetate. The polypeptide is Malate dehydrogenase (Burkholderia mallei (strain NCTC 10247)).